Consider the following 138-residue polypeptide: Acidic phospholipase A2 1 (138 aa).

The N-terminal stretch at 1 to 16 (MRTLWIMAVLLVGVEG) is a signal peptide. Cystine bridges form between cysteine 42–cysteine 131, cysteine 44–cysteine 60, cysteine 59–cysteine 111, cysteine 65–cysteine 138, cysteine 66–cysteine 104, cysteine 73–cysteine 97, and cysteine 91–cysteine 102. 3 residues coordinate Ca(2+): phenylalanine 43, glycine 45, and glycine 47. Histidine 63 is a catalytic residue. Aspartate 64 contacts Ca(2+). Residue aspartate 105 is part of the active site.

It belongs to the phospholipase A2 family. Group II subfamily. D49 sub-subfamily. It depends on Ca(2+) as a cofactor. In terms of tissue distribution, expressed by the venom gland.

It is found in the secreted. It carries out the reaction a 1,2-diacyl-sn-glycero-3-phosphocholine + H2O = a 1-acyl-sn-glycero-3-phosphocholine + a fatty acid + H(+). Snake venom phospholipase A2 (PLA2) that has high lipolytic activity. PLA2 catalyzes the calcium-dependent hydrolysis of the 2-acyl groups in 3-sn-phosphoglycerides. The chain is Acidic phospholipase A2 1 from Craspedocephalus gramineus (Bamboo pit viper).